Reading from the N-terminus, the 293-residue chain is Formamidopyrimidine-DNA glycosylase (293 aa).

Catalysis depends on proline 2, which acts as the Schiff-base intermediate with DNA. The active-site Proton donor is the glutamate 3. Lysine 58 functions as the Proton donor; for beta-elimination activity in the catalytic mechanism. The DNA site is built by histidine 104, arginine 123, and arginine 166. The FPG-type zinc finger occupies 257–293 (QVYDREGDKCRTPACKGAVKRFTQNGRSTFWCPVCQT). The Proton donor; for delta-elimination activity role is filled by arginine 283.

It belongs to the FPG family. As to quaternary structure, monomer. It depends on Zn(2+) as a cofactor.

It catalyses the reaction Hydrolysis of DNA containing ring-opened 7-methylguanine residues, releasing 2,6-diamino-4-hydroxy-5-(N-methyl)formamidopyrimidine.. The catalysed reaction is 2'-deoxyribonucleotide-(2'-deoxyribose 5'-phosphate)-2'-deoxyribonucleotide-DNA = a 3'-end 2'-deoxyribonucleotide-(2,3-dehydro-2,3-deoxyribose 5'-phosphate)-DNA + a 5'-end 5'-phospho-2'-deoxyribonucleoside-DNA + H(+). In terms of biological role, involved in base excision repair of DNA damaged by oxidation or by mutagenic agents. Acts as a DNA glycosylase that recognizes and removes damaged bases. Has a preference for oxidized purines, such as 7,8-dihydro-8-oxoguanine (8-oxoG). Has AP (apurinic/apyrimidinic) lyase activity and introduces nicks in the DNA strand. Cleaves the DNA backbone by beta-delta elimination to generate a single-strand break at the site of the removed base with both 3'- and 5'-phosphates. This Nitrobacter winogradskyi (strain ATCC 25391 / DSM 10237 / CIP 104748 / NCIMB 11846 / Nb-255) protein is Formamidopyrimidine-DNA glycosylase.